A 147-amino-acid polypeptide reads, in one-letter code: Large ribosomal subunit protein uL13 (147 aa).

It belongs to the universal ribosomal protein uL13 family. In terms of assembly, part of the 50S ribosomal subunit.

In terms of biological role, this protein is one of the early assembly proteins of the 50S ribosomal subunit, although it is not seen to bind rRNA by itself. It is important during the early stages of 50S assembly. The polypeptide is Large ribosomal subunit protein uL13 (Polaromonas naphthalenivorans (strain CJ2)).